Here is a 105-residue protein sequence, read N- to C-terminus: Small ribosomal subunit protein eS10B (105 aa).

The protein belongs to the eukaryotic ribosomal protein eS10 family. In terms of assembly, component of the small ribosomal subunit (SSU). Mature yeast ribosomes consist of a small (40S) and a large (60S) subunit. The 40S small subunit contains 1 molecule of ribosomal RNA (18S rRNA) and 33 different proteins (encoded by 57 genes). The large 60S subunit contains 3 rRNA molecules (25S, 5.8S and 5S rRNA) and 46 different proteins (encoded by 81 genes). eS10 interacts with GCN1 (via middle region); this interaction is direct and promotes GCN2 kinase activity. The N-terminus is not modified.

Its subcellular location is the cytoplasm. Functionally, component of the ribosome, a large ribonucleoprotein complex responsible for the synthesis of proteins in the cell. The small ribosomal subunit (SSU) binds messenger RNAs (mRNAs) and translates the encoded message by selecting cognate aminoacyl-transfer RNA (tRNA) molecules. The large subunit (LSU) contains the ribosomal catalytic site termed the peptidyl transferase center (PTC), which catalyzes the formation of peptide bonds, thereby polymerizing the amino acids delivered by tRNAs into a polypeptide chain. The nascent polypeptides leave the ribosome through a tunnel in the LSU and interact with protein factors that function in enzymatic processing, targeting, and the membrane insertion of nascent chains at the exit of the ribosomal tunnel. eS10 plays a role as a positive regulator of the GCN2 kinase activity by stimulating GCN1-mediated GCN2 activation. In Saccharomyces cerevisiae (strain ATCC 204508 / S288c) (Baker's yeast), this protein is Small ribosomal subunit protein eS10B.